A 440-amino-acid polypeptide reads, in one-letter code: Microtubule-associated tumor suppressor 1 homolog A (440 aa).

Residues K44–S67 form a disordered region. Residues S69–L401 adopt a coiled-coil conformation. A disordered region spans residues G407–R440. Positions P417–F432 are enriched in polar residues.

This sequence belongs to the MTUS1 family. Homodimer.

The protein resides in the mitochondrion. Its subcellular location is the golgi apparatus. It localises to the cell membrane. The protein localises to the nucleus. In terms of biological role, may inhibit cell proliferation. This Danio rerio (Zebrafish) protein is Microtubule-associated tumor suppressor 1 homolog A (mtus1a).